The primary structure comprises 3564 residues: Sushi, von Willebrand factor type A, EGF and pentraxin domain-containing protein 1 (3564 aa).

The N-terminal stretch at 1–17 (MWTRLAFCCWALALVSG) is a signal peptide. The 182-residue stretch at 84-265 (ELVFLVDESS…LARRALHEDL (182 aa)) folds into the VWFA domain. A glycan (N-linked (GlcNAc...) asparagine) is linked at Asn-187. 3 consecutive Sushi domains span residues 377 to 436 (VHCP…FCRV), 437 to 496 (RTCP…RCVE), and 497 to 561 (RHCA…VCKD). 6 disulfide bridges follow: Cys-379–Cys-421, Cys-407–Cys-434, Cys-439–Cys-481, Cys-467–Cys-494, Cys-499–Cys-544, and Cys-530–Cys-559. HYR domains follow at residues 560–644 (KDVE…KVID) and 645–724 (VEPP…VIKG). Residues 725–789 (SPCEVPFTPV…YSTEWPDCAI (65 aa)) form the Sushi 4 domain. 20 cysteine pairs are disulfide-bonded: Cys-727–Cys-769, Cys-753–Cys-787, Cys-1192–Cys-1203, Cys-1197–Cys-1212, Cys-1214–Cys-1223, Cys-1230–Cys-1241, Cys-1235–Cys-1250, Cys-1252–Cys-1261, Cys-1268–Cys-1279, Cys-1273–Cys-1288, Cys-1290–Cys-1299, Cys-1306–Cys-1317, Cys-1311–Cys-1326, Cys-1328–Cys-1337, Cys-1344–Cys-1355, Cys-1349–Cys-1364, Cys-1366–Cys-1375, Cys-1382–Cys-1393, Cys-1387–Cys-1402, and Cys-1404–Cys-1413. Residues 1188–1224 (VFHECFLNPCHNSGTCQQLGRGYVCLCPPGYTGLKCE) form the EGF-like 1 domain. In terms of domain architecture, EGF-like 2; calcium-binding spans 1226–1262 (DIDECSSLPCLNGGICRDKVGGFTCECSSGYTGQICE). In terms of domain architecture, EGF-like 3; calcium-binding spans 1264 to 1300 (NINECSSSPCLNKGTCTDGLASYRCTCVSGYVGVHCE). Positions 1302–1338 (DVNECQSSPCLNNAVCKDQVGGFSCKCPPGFLGTRCE) constitute an EGF-like 4; calcium-binding domain. Positions 1340–1376 (NVDECLSQPCQNGATCKDGANSFRCQCPAGFTGPHCE) constitute an EGF-like 5; calcium-binding domain. The EGF-like 6; calcium-binding domain maps to 1378-1414 (NINECQSNPCRNQATCVDELNSYSCKCRPGFSGRRCE). The Pentraxin (PTX) domain occupies 1419–1623 (SGFNLDFEVS…VKVDSSSIFC (205 aa)). Sushi domains lie at 1624–1682 (SDCP…HCER) and 1683–1740 (IRCG…SCLD). Cystine bridges form between Cys-1626/Cys-1667, Cys-1653/Cys-1680, Cys-1685/Cys-1725, Cys-1711/Cys-1738, Cys-1744/Cys-1756, Cys-1750/Cys-1765, Cys-1767/Cys-1778, Cys-1784/Cys-1824, Cys-1810/Cys-1837, Cys-1842/Cys-1882, Cys-1868/Cys-1895, Cys-1900/Cys-1940, Cys-1926/Cys-1953, Cys-1958/Cys-1998, Cys-1984/Cys-2011, Cys-2016/Cys-2056, Cys-2042/Cys-2073, Cys-2078/Cys-2121, Cys-2107/Cys-2136, Cys-2141/Cys-2181, Cys-2167/Cys-2194, Cys-2199/Cys-2240, Cys-2226/Cys-2254, Cys-2259/Cys-2299, Cys-2285/Cys-2313, Cys-2318/Cys-2358, Cys-2344/Cys-2371, Cys-2376/Cys-2417, Cys-2403/Cys-2430, Cys-2435/Cys-2475, Cys-2461/Cys-2488, Cys-2493/Cys-2533, Cys-2519/Cys-2546, Cys-2551/Cys-2591, and Cys-2577/Cys-2603. Residues 1740-1779 (DVDECAVGSDCSEHASCLNTNGSYICSCKPPYTGDGKNCA) form the EGF-like 7; calcium-binding domain. Asn-1760 carries N-linked (GlcNAc...) asparagine glycosylation. 14 Sushi domains span residues 1776-1839 (KNCA…SCEA), 1840-1897 (ISCG…VCEL), 1898-1955 (VKCS…SCQL), 1956-2013 (VSCG…QCLA), 2014-2075 (VSCD…RCIA), 2076-2138 (HFCE…QCIP), 2139-2196 (VRCG…TCHP), 2197-2256 (VSCN…SCTP), 2257-2315 (LNCG…KCVP), 2316-2373 (TKCA…VCKL), 2374-2432 (VLCQ…ECVP), 2433-2490 (VECP…MCRP), 2491-2548 (IECP…SCNA), and 2549-2605 (IHCS…TCVP). Positions 2634–2641 (DMMEVPYL) are important for the interaction with integrin ITGA9:ITGB1. Sushi domains follow at residues 2659–2708 (EESL…SCIS), 2709–2766 (IECD…RCEV), 2767–2824 (ISCS…VCLP), 2825–2882 (VDCG…SCVP), 2883–2940 (VRCP…ICKP), 2941–2998 (ATCG…SCLP), 2999–3054 (CTCS…LCEH), 3055–3112 (ADCG…TCEP), 3113–3171 (VSCG…NCSP), 3172–3231 (KTCP…SCIP), 3232–3289 (VVCG…VCRE), 3290–3347 (SRCE…LCKP), 3348–3406 (NPCP…RCEK), and 3407–3463 (ISCG…ICRA). 33 disulfides stabilise this stretch: Cys-2679/Cys-2706, Cys-2711/Cys-2751, Cys-2737/Cys-2764, Cys-2769/Cys-2809, Cys-2795/Cys-2822, Cys-2827/Cys-2867, Cys-2853/Cys-2880, Cys-2885/Cys-2925, Cys-2911/Cys-2938, Cys-2943/Cys-2983, Cys-2969/Cys-2996, Cys-3001/Cys-3040, Cys-3026/Cys-3052, Cys-3057/Cys-3097, Cys-3083/Cys-3110, Cys-3115/Cys-3156, Cys-3141/Cys-3169, Cys-3174/Cys-3214, Cys-3200/Cys-3229, Cys-3234/Cys-3274, Cys-3260/Cys-3287, Cys-3292/Cys-3332, Cys-3318/Cys-3345, Cys-3350/Cys-3391, Cys-3377/Cys-3404, Cys-3409/Cys-3449, Cys-3435/Cys-3461, Cys-3497/Cys-3507, Cys-3501/Cys-3513, Cys-3515/Cys-3524, Cys-3529/Cys-3539, Cys-3533/Cys-3545, and Cys-3547/Cys-3556. EGF-like domains are found at residues 3493–3525 (EEPI…SRCH) and 3526–3557 (TATC…HDCS).

Interacts (via Sushi domain 21) with ITGA9:ITGB1; thereby inhibits Ca(2+) intracellular signaling and as a result represses vasocontraction. Interacts (via Sushi domain 21) with ITGA4:ITGB1; thereby inhibits Ca(2+) intracellular signaling and as a result represses vasocontraction. Interacts with ANGPT1 and ANGPT2. Interacts with PEAR1 (via extracellular domain). Interacts with HSPG2, TLN1, FN1, COPA, CCT2, IQGAP1, LAMC1 and NID1. Interacts (via C-terminus) with TIE1.

The protein resides in the secreted. It is found in the nucleus. Its subcellular location is the cytoplasm. It localises to the membrane. Functionally, required for morphological development, cell alignment and migration of lymphatic endothelial cells during embryonic development, potentially via modulation of ANGPT2-TIE1 signaling and subsequent activation of FOXC2 transcription. Required for embryonic lymphatic vascular development, via mediating the correct formation of the first lymphovenous contact site and tight association of the lymphatic endothelium with the venous endothelium. Represses PRKCA-mediated L-type voltage-gated channel Ca(2+) influx and ROCK-mediated calcium sensitivity in vascular smooth muscle cells, via its interaction with integrins, thereby inhibiting vasocontraction. Promotes platelet activation, via its interaction with PEAR1 and subsequent activation of AKT/mTOR signaling. Plays a role in epidermal development and keratinocyte differentiation, independent of cell-cell adhesion. May play a role in initial cell attachment of stromal osteogenic cells. May promote myoblast cell adhesion when in the presence of integrin ITGA9:ITGB1. This is Sushi, von Willebrand factor type A, EGF and pentraxin domain-containing protein 1 (Svep1) from Rattus norvegicus (Rat).